The chain runs to 130 residues: Small ribosomal subunit protein bS16 (130 aa).

Residues 80–130 (AGHTPKKERANMKKAQPGKKAVERAEEKAAKASAAAEAPAEAPAAEAAAEE) form a disordered region. The segment covering 99–109 (KAVERAEEKAA) has biased composition (basic and acidic residues). A compositionally biased stretch (low complexity) spans 110-130 (KASAAAEAPAEAPAAEAAAEE).

It belongs to the bacterial ribosomal protein bS16 family.

This chain is Small ribosomal subunit protein bS16, found in Jannaschia sp. (strain CCS1).